The primary structure comprises 309 residues: Malate dehydrogenase (309 aa).

Residues 8-13 (GAGLVG) and Asp33 each bind NAD(+). 2 residues coordinate substrate: Arg82 and Arg88. NAD(+)-binding positions include Asn95 and 118–120 (VSN). Substrate contacts are provided by Asn120 and Arg151. His175 acts as the Proton acceptor in catalysis.

Belongs to the LDH/MDH superfamily. MDH type 3 family.

The enzyme catalyses (S)-malate + NAD(+) = oxaloacetate + NADH + H(+). In terms of biological role, catalyzes the reversible oxidation of malate to oxaloacetate. This Pseudomonas putida (strain ATCC 700007 / DSM 6899 / JCM 31910 / BCRC 17059 / LMG 24140 / F1) protein is Malate dehydrogenase.